Reading from the N-terminus, the 312-residue chain is DNA-directed RNA polymerase subunit alpha (312 aa).

The tract at residues 1-229 (MLQYQIDRIE…ELFQPLATVT (229 aa)) is alpha N-terminal domain (alpha-NTD). The segment at 239–312 (EPTAEAQIPL…IQIPQSRTSA (74 aa)) is alpha C-terminal domain (alpha-CTD).

This sequence belongs to the RNA polymerase alpha chain family. In cyanobacteria the RNAP catalytic core is composed of 2 alpha, 1 beta, 1 beta', 1 gamma and 1 omega subunit. When a sigma factor is associated with the core the holoenzyme is formed, which can initiate transcription.

The catalysed reaction is RNA(n) + a ribonucleoside 5'-triphosphate = RNA(n+1) + diphosphate. Its function is as follows. DNA-dependent RNA polymerase catalyzes the transcription of DNA into RNA using the four ribonucleoside triphosphates as substrates. This is DNA-directed RNA polymerase subunit alpha from Synechococcus sp. (strain WH7803).